Reading from the N-terminus, the 705-residue chain is Ribonuclease R (705 aa).

In terms of domain architecture, RNB spans Arg-240–Arg-567. Positions Gly-615–Ile-696 constitute an S1 motif domain.

This sequence belongs to the RNR ribonuclease family. RNase R subfamily.

The protein resides in the cytoplasm. It catalyses the reaction Exonucleolytic cleavage in the 3'- to 5'-direction to yield nucleoside 5'-phosphates.. 3'-5' exoribonuclease that releases 5'-nucleoside monophosphates and is involved in maturation of structured RNAs. The sequence is that of Ribonuclease R from Aquifex aeolicus (strain VF5).